The primary structure comprises 700 residues: Phenoloxidase 8 (700 aa).

The propeptide occupies 1–51 (MATLTQKFHGLLQHPLEPLFLPKNDGTLFYDLPERFLTSRYSPIGQNLANR). N-linked (GlcNAc...) asparagine glycans are attached at residues Asn64 and Asn198. The Cu cation site is built by His223, His227, and His252. N-linked (GlcNAc...) asparagine glycosylation is present at Asn295. Glu364 acts as the Proton acceptor in catalysis. Positions 379, 383, and 419 each coordinate Cu cation. Residues Asn445, Asn507, and Asn565 are each glycosylated (N-linked (GlcNAc...) asparagine). 2 disulfides stabilise this stretch: Cys592–Cys636 and Cys594–Cys643.

It belongs to the tyrosinase family. Homodimer. Cu(2+) serves as cofactor. In terms of processing, upon activation, a trypsin type protease cleaves prophenol oxidase to yield the active enzyme.

It localises to the secreted. It carries out the reaction 2 tyramine + O2 = 2 dopamine. The catalysed reaction is 2 dopamine + O2 = 2 dopamine quinone + 2 H2O. Functionally, this is a copper-containing oxidase that functions in the formation of pigments such as melanins and other polyphenolic compounds. Catalyzes the oxidation of o-diphenols such as dopamine. Also oxidizes monophenols such as tyramine. This chain is Phenoloxidase 8, found in Anopheles gambiae (African malaria mosquito).